The following is an 80-amino-acid chain: Acyl carrier protein (80 aa).

Positions serine 2 to isoleucine 77 constitute a Carrier domain. Serine 37 is subject to O-(pantetheine 4'-phosphoryl)serine.

Belongs to the acyl carrier protein (ACP) family. Post-translationally, 4'-phosphopantetheine is transferred from CoA to a specific serine of apo-ACP by AcpS. This modification is essential for activity because fatty acids are bound in thioester linkage to the sulfhydryl of the prosthetic group.

Its subcellular location is the plastid. It is found in the chloroplast. It participates in lipid metabolism; fatty acid biosynthesis. Its function is as follows. Carrier of the growing fatty acid chain in fatty acid biosynthesis. This Cylindrotheca sp. (strain N1) (Marine diatom) protein is Acyl carrier protein.